The sequence spans 174 residues: ATP synthase subunit b 2 (174 aa).

A helical transmembrane segment spans residues isoleucine 27–proline 47.

Belongs to the ATPase B chain family. In terms of assembly, F-type ATPases have 2 components, F(1) - the catalytic core - and F(0) - the membrane proton channel. F(1) has five subunits: alpha(3), beta(3), gamma(1), delta(1), epsilon(1). F(0) has three main subunits: a(1), b(2) and c(10-14). The alpha and beta chains form an alternating ring which encloses part of the gamma chain. F(1) is attached to F(0) by a central stalk formed by the gamma and epsilon chains, while a peripheral stalk is formed by the delta and b chains.

It is found in the cell inner membrane. F(1)F(0) ATP synthase produces ATP from ADP in the presence of a proton or sodium gradient. F-type ATPases consist of two structural domains, F(1) containing the extramembraneous catalytic core and F(0) containing the membrane proton channel, linked together by a central stalk and a peripheral stalk. During catalysis, ATP synthesis in the catalytic domain of F(1) is coupled via a rotary mechanism of the central stalk subunits to proton translocation. Its function is as follows. Component of the F(0) channel, it forms part of the peripheral stalk, linking F(1) to F(0). The b'-subunit is a diverged and duplicated form of b found in plants and photosynthetic bacteria. This is ATP synthase subunit b 2 (atpF2) from Dinoroseobacter shibae (strain DSM 16493 / NCIMB 14021 / DFL 12).